The chain runs to 240 residues: Poxin (240 aa).

The Proton donor role is filled by histidine 46. Tyrosine 181 functions as the Shared with catalytic histidine of dimeric partner in the catalytic mechanism. Lysine 185 (proton acceptor; shared with catalytic histidine of dimeric partner) is an active-site residue.

Belongs to the poxin family. As to quaternary structure, homodimer.

The enzyme catalyses 2',3'-cGAMP + H2O = Gp(2'-5')Ap(3') + H(+). In terms of biological role, nuclease that cleaves host 2',3'-cGAMP. This chain is Poxin (p26), found in Bombyx mori (Silk moth).